The following is a 1108-amino-acid chain: Retinal guanylyl cyclase 1 (1108 aa).

An N-terminal signal peptide occupies residues 1-54 (MSAWLLPAGGLPGAGFCVPARQSPSSFSRVLRWPRPGLPGLLLLLLLPSPSALS). At 55-465 (AVFKVGVLGP…PDVICNGGVE (411 aa)) the chain is on the extracellular side. The cysteines at positions 108 and 136 are disulfide-linked. N300 carries N-linked (GlcNAc...) asparagine glycosylation. The helical transmembrane segment at 466–490 (PGLVFVGFLLVIGMGLTGAFLAHYL) threads the bilayer. The 321-residue stretch at 491-811 (RHRLLHMQMA…DLTFDLFKSI (321 aa)) folds into the Protein kinase domain. The Cytoplasmic portion of the chain corresponds to 491–1108 (RHRLLHMQMA…KARPGQFTGK (618 aa)). The Guanylate cyclase domain maps to 883–1013 (TLYFSDIVGF…DTVNTASRME (131 aa)). The interval 1069–1108 (IPKPPDLQPGASNHGISLQEIPPERRKKLEKARPGQFTGK) is disordered.

The protein belongs to the adenylyl cyclase class-4/guanylyl cyclase family. Homodimer; requires homodimerization for guanylyl cyclase activity. Interacts (via C-terminus) with RD3 (via C-terminus); promotes the exit of GUCY2E from the endoplasmic reticulum and its trafficking to the photoreceptor outer segments. Interaction with RD3 negatively regulates GUCY2E guanylate cyclase activity. Post-translationally, there are 9 conserved cysteine residues in sensory guanylate cyclases, 6 in the extracellular domain, which may be involved in intra- or interchain disulfide bonds.

The protein resides in the photoreceptor outer segment membrane. It is found in the endoplasmic reticulum membrane. The catalysed reaction is GTP = 3',5'-cyclic GMP + diphosphate. Its activity is regulated as follows. Activated by GUCA1A when free calcium ions concentration is low, and inhibited by GUCA1A when free calcium ions concentration is high. Negatively regulated by RD3; RD3 inhibits the basal and GUCA1A-stimulated guanylate cyclase activity. Its function is as follows. Catalyzes the synthesis of cyclic GMP (cGMP) in rods and cones of photoreceptors. Plays an essential role in phototransduction, by mediating cGMP replenishment. May also participate in the trafficking of membrane-asociated proteins to the photoreceptor outer segment membrane. The chain is Retinal guanylyl cyclase 1 (Gucy2e) from Mus musculus (Mouse).